Consider the following 858-residue polypeptide: Volume-regulated anion channel subunit LRRC8D (858 aa).

At 1–22 (MFTLAEVASLNDIQPTYRILKP) the chain is on the cytoplasmic side. Residues 23-48 (WWDVFMDYLAVVMLMVAIFAGTMQLT) form a helical membrane-spanning segment. Over 49-163 (KDQVVCLPVL…YHLALPWYSK (115 aa)) the chain is Extracellular. Cysteine 54 and cysteine 354 are oxidised to a cystine. The segment at 118–137 (AESTFPSQETKKEKRDPTGR) is disordered. The segment covering 126-137 (ETKKEKRDPTGR) has biased composition (basic and acidic residues). A helical transmembrane segment spans residues 164–182 (YFPYLALIHTIILMVSSNF). Residues 183-308 (WFKYPKTCSK…EDSDLIYKLY (126 aa)) lie on the Cytoplasmic side of the membrane. The tract at residues 221–251 (SEENKQRITGAQTLPKHVSTSSDEGSPSAST) is disordered. A compositionally biased stretch (polar residues) spans 227–251 (RITGAQTLPKHVSTSSDEGSPSAST). A phosphoserine mark is found at serine 241, serine 242, and serine 246. The helical transmembrane segment at 309 to 330 (VVQTLIKTAKFIFILCYTANFV) threads the bilayer. The Extracellular segment spans residues 331-360 (NAISFEHVCKPKVEHLTGYEVFECTHNMAY). Residues 361 to 386 (MLKKLLISYISIICVYGFICLYTLFW) traverse the membrane as a helical segment. Topologically, residues 387–858 (LFRIPLKEYS…DVNVPFANGI (472 aa)) are cytoplasmic. 13 LRR repeats span residues 514–534 (NLQE…AFSF), 538–559 (HLRC…VYLL), 561–582 (NLRE…IGLE), 589–609 (HLKI…ITDV), 612–632 (HLTK…NSLK), 636–657 (NVAE…IFSL), 659–680 (NLQE…ISFQ), 684–705 (RLTC…ITHV), 707–728 (NLES…VFSL), 730–751 (KLRC…IGLL), 753–774 (NLQH…LFKC), 776–797 (KLRT…ISQL), and 799–820 (QLTQ…LGQC).

The protein belongs to the LRRC8 family. In terms of assembly, heterohexamer; oligomerizes with other LRRC8 proteins (LRRC8A, LRRC8B, LRRC8C and/or LRRC8E) to form a heterohexamer. In vivo, the subunit composition may depend primarily on expression levels, and heterooligomeric channels containing various proportions of the different LRRC8 proteins may coexist.

Its subcellular location is the cell membrane. The protein localises to the endoplasmic reticulum membrane. The catalysed reaction is chloride(in) = chloride(out). It catalyses the reaction iodide(out) = iodide(in). The enzyme catalyses taurine(out) = taurine(in). Non-essential component of the volume-regulated anion channel (VRAC, also named VSOAC channel), an anion channel required to maintain a constant cell volume in response to extracellular or intracellular osmotic changes. The VRAC channel conducts iodide better than chloride and can also conduct organic osmolytes like taurine. Plays a redundant role in the efflux of amino acids, such as aspartate, in response to osmotic stress. Channel activity requires LRRC8A plus at least one other family member (LRRC8B, LRRC8C, LRRC8D or LRRC8E); channel characteristics depend on the precise subunit composition. Also acts as a regulator of glucose-sensing in pancreatic beta cells: VRAC currents, generated in response to hypotonicity- or glucose-induced beta cell swelling, depolarize cells, thereby causing electrical excitation, leading to increase glucose sensitivity and insulin secretion. VRAC channels containing LRRC8D inhibit transport of immunoreactive cyclic dinucleotide GMP-AMP (2'-3'-cGAMP), an immune messenger produced in response to DNA virus in the cytosol. In Rattus norvegicus (Rat), this protein is Volume-regulated anion channel subunit LRRC8D.